The primary structure comprises 310 residues: Zinc finger protein 346 (310 aa).

N-acetylmethionine is present on Met-1. The span at 1 to 12 shows a compositional bias: low complexity; the sequence is MEYPAPAAVQAA. Residues 1 to 33 are disordered; sequence MEYPAPAAVQAADGGGAGPYNSSELLEGQEPDG. The segment at 70–104 adopts a Matrin-type 1 zinc-finger fold; the sequence is FTNTQCKVCCALLISESQKLAHYQSKKHANKVKRY. Zn(2+) contacts are provided by Cys-75, Cys-78, His-91, and His-97. Lys-114 participates in a covalent cross-link: Glycyl lysine isopeptide (Lys-Gly) (interchain with G-Cter in SUMO2). The Matrin-type 2 zinc-finger motif lies at 131–165; it reads DKNQCCPICNMTFSSPVVAQSHYLGKTHAKNLKLK. Zn(2+) is bound by residues Cys-136, Cys-139, His-152, and His-158. Lys-170 participates in a covalent cross-link: Glycyl lysine isopeptide (Lys-Gly) (interchain with G-Cter in SUMO2). Matrin-type zinc fingers lie at residues 198 to 232 and 252 to 286; these read DPDK…ETKL and GKGY…SPKT. Residues 278 to 310 form a disordered region; that stretch reads KHKNQSPKTVASSLGQIPMQRQPIQKDSTTLED. Polar residues-rich tracts occupy residues 283-292 and 299-310; these read SPKTVASSLG and QPIQKDSTTLED.

As to quaternary structure, forms a heteromeric complex with XPO5 and ILF3. Found in a nuclear export complex with XPO5, RAN, ILF3, ZNF346 and double-stranded RNA. Interacts with XPO5. Interacts with ILF3 in an RNA-independent manner.

It localises to the nucleus. The protein localises to the nucleolus. The protein resides in the cytoplasm. Binds with low affinity to dsDNA and ssRNA, and with high affinity to dsRNA, with no detectable sequence specificity. This is Zinc finger protein 346 (ZNF346) from Pongo abelii (Sumatran orangutan).